We begin with the raw amino-acid sequence, 242 residues long: Type III pantothenate kinase (242 aa).

Position 5-12 (5-12 (DLGNTRLK)) interacts with ATP. Substrate is bound by residues Tyr94 and 100 to 103 (GCDR). Catalysis depends on Asp102, which acts as the Proton acceptor. An ATP-binding site is contributed by Thr124. Thr175 contributes to the substrate binding site.

The protein belongs to the type III pantothenate kinase family. Homodimer. NH4(+) is required as a cofactor. It depends on K(+) as a cofactor.

The protein resides in the cytoplasm. It carries out the reaction (R)-pantothenate + ATP = (R)-4'-phosphopantothenate + ADP + H(+). It functions in the pathway cofactor biosynthesis; coenzyme A biosynthesis; CoA from (R)-pantothenate: step 1/5. Catalyzes the phosphorylation of pantothenate (Pan), the first step in CoA biosynthesis. The protein is Type III pantothenate kinase of Psychrobacter cryohalolentis (strain ATCC BAA-1226 / DSM 17306 / VKM B-2378 / K5).